Here is a 795-residue protein sequence, read N- to C-terminus: MGTLGKAREAPRKPCHGSRAGPKARLEAKSTNSPLPAQPSLAQITQFRMMVSLGHLAKGASLDDLIDSCIQSFDADGNLCRNNQLLQVMLTMHRIIISSAELLQKVMNLYKDALEKNSPGVCLKICYFVRYWITEFWIMFKMDASLTSTMEEFQDLVKANGEETHCHLIDTTQINSRDWSRKLTQRIKSNTSKKRKVSLLFDHLEPEELSEHLTYLEFKSFRRISFSDYQNYLVNSCVKENPTMERSIALCNGISQWVQLMVLSRPTPQLRAEVFIKFIHVAQKLHQLQNFNTLMAVIGGLCHSSISRLKETSSHVPHEINKVLGEMTELLSSCRNYDNYRRAYGECTHFKIPILGVHLKDLISLYEAMPDYLEDGKVNVQKLLALYNHINELVQLQEMAPPLDANKDLVHLLTLSLDLYYTEDEIYELSYAREPRNHRAPPLTPSKPPVVVDWASGVSPKPDPKTISKHVQRMVDSVFKNYDLDQDGYISQEEFEKIAASFPFSFCVMDKDREGLISRDEITAYFMRASSIYSKLGLGFPHNFQETTYLKPTFCDNCAGFLWGVIKQGYRCKDCGMNCHKQCKDLVVFECKKRIKSPAISTENISSVVPMSTLCPLGTKDLLHAPEEGSFIFQNGEIVDHSEESKDRTIMLLGVSSQKISVRLKRTVAHKSTQTESFPWVGGETTPGHFVLSSPRKSAQGALYVHSPASPCPSPALVRKRAFVKWENKESLIKPKPELHLRLRTYQELEQEINTLKADNDALKIQLKYAQKKIESLQLGKSNHVLAQMDHGDSA.

Basic and acidic residues predominate over residues Met1 to Arg12. The disordered stretch occupies residues Met1–Ala37. An N-terminal Ras-GEF domain is found at Leu53 to Ser176. The ras exchanger motif region; required for transforming activity stretch occupies residues Ala57 to Tyr110. Phosphothreonine; by PKC is present on Thr184. Residues Glu205 to Arg436 form the Ras-GEF domain. EF-hand domains lie at His470 to Ser505 and Phe506 to Ile532. Residues Asp483, Asp485, Asp487, Tyr489, and Glu494 each coordinate Ca(2+). The Phorbol-ester/DAG-type zinc-finger motif lies at Pro541–Cys591. Ser597 is modified (phosphoserine). The suppress the PT region-mediated translocation to plasma membrane stretch occupies residues Thr686 to Ser694. The tract at residues Leu717 to Ala795 is PT region; mediates the BCR-dependent translocation to plasma membrane. Residues Glu738–Leu779 are a coiled coil.

This sequence belongs to the RASGRP family. In terms of assembly, homodimer. Forms a signaling complex with DGKZ and HRAS. Interacts with F-actin. Interacts with SKAP1. In terms of tissue distribution, detected in spleen and thymus. Expressed by mature thymocytes and to a lower extent by bone marrow-derived mast cells (at protein level). Detected in B-cells and keratinocytes (at protein level).

The protein localises to the cytoplasm. It localises to the cytosol. Its subcellular location is the cell membrane. The protein resides in the golgi apparatus membrane. It is found in the endoplasmic reticulum membrane. With respect to regulation, autoinhibited. Activated by diacylglycerol and calcium binding, which induces a conformational change releasing the autoinhibitory state. Regulated by DGKA. Regulated by DGKZ. Regulated by PLC gamma and F-actin polymerization. In terms of biological role, functions as a calcium- and diacylglycerol (DAG)-regulated nucleotide exchange factor specifically activating Ras through the exchange of bound GDP for GTP. Activates the Erk/MAP kinase cascade. Regulates T-cell/B-cell development, homeostasis and differentiation by coupling T-lymphocyte/B-lymphocyte antigen receptors to Ras. Regulates NK cell cytotoxicity and ITAM-dependent cytokine production by activation of Ras-mediated ERK and JNK pathways. Functions in mast cell degranulation and cytokine secretion, regulating FcERI-evoked allergic responses. May also function in differentiation of other cell types. Proto-oncogene, which promotes T-cell lymphomagenesis when its expression is deregulated. The chain is RAS guanyl-releasing protein 1 (Rasgrp1) from Mus musculus (Mouse).